A 188-amino-acid polypeptide reads, in one-letter code: HGPRTase-like protein 1 (188 aa).

Belongs to the purine/pyrimidine phosphoribosyltransferase family. Archaeal HPRT subfamily.

May catalyze a purine salvage reaction, the substrate is unknown. The sequence is that of HGPRTase-like protein 1 from Haloferax volcanii (strain ATCC 29605 / DSM 3757 / JCM 8879 / NBRC 14742 / NCIMB 2012 / VKM B-1768 / DS2) (Halobacterium volcanii).